An 872-amino-acid polypeptide reads, in one-letter code: Alanine--tRNA ligase (872 aa).

H567, H571, C669, and H673 together coordinate Zn(2+).

This sequence belongs to the class-II aminoacyl-tRNA synthetase family. Zn(2+) is required as a cofactor.

The protein localises to the cytoplasm. The enzyme catalyses tRNA(Ala) + L-alanine + ATP = L-alanyl-tRNA(Ala) + AMP + diphosphate. Catalyzes the attachment of alanine to tRNA(Ala) in a two-step reaction: alanine is first activated by ATP to form Ala-AMP and then transferred to the acceptor end of tRNA(Ala). Also edits incorrectly charged Ser-tRNA(Ala) and Gly-tRNA(Ala) via its editing domain. This chain is Alanine--tRNA ligase, found in Streptococcus thermophilus (strain ATCC BAA-491 / LMD-9).